A 127-amino-acid chain; its full sequence is Fluoride-specific ion channel FluC (127 aa).

Helical transmembrane passes span 4–24 (SILAIALGAALGALLRWFLGL), 36–56 (GTLLANLVGGYVIGAAIAYFA), 68–88 (LIITGFCGGLTTFSTFSAEVV), and 99–119 (AAGAIATHVSGSLLMTLLGLF). G75 and T78 together coordinate Na(+).

It belongs to the fluoride channel Fluc/FEX (TC 1.A.43) family.

It is found in the cell inner membrane. The catalysed reaction is fluoride(in) = fluoride(out). Its activity is regulated as follows. Na(+) is not transported, but it plays an essential structural role and its presence is essential for fluoride channel function. In terms of biological role, fluoride-specific ion channel. Important for reducing fluoride concentration in the cell, thus reducing its toxicity. The sequence is that of Fluoride-specific ion channel FluC from Pseudomonas aeruginosa (strain UCBPP-PA14).